The sequence spans 406 residues: ATP phosphoribosyltransferase regulatory subunit (406 aa).

It belongs to the class-II aminoacyl-tRNA synthetase family. HisZ subfamily. In terms of assembly, heteromultimer composed of HisG and HisZ subunits.

The protein resides in the cytoplasm. Its pathway is amino-acid biosynthesis; L-histidine biosynthesis; L-histidine from 5-phospho-alpha-D-ribose 1-diphosphate: step 1/9. Required for the first step of histidine biosynthesis. May allow the feedback regulation of ATP phosphoribosyltransferase activity by histidine. This Methylococcus capsulatus (strain ATCC 33009 / NCIMB 11132 / Bath) protein is ATP phosphoribosyltransferase regulatory subunit.